We begin with the raw amino-acid sequence, 253 residues long: Coenzyme F420:L-glutamate ligase (253 aa).

Residues 9 to 12 (LPEI), 38 to 39 (ST), and Lys43 contribute to the GTP site. An a divalent metal cation-binding site is contributed by Asp113. Asn116 lines the GTP pocket. A divalent metal cation-binding residues include Asp148, Thr149, and Glu206. 204–211 (AGEGDDGT) lines the GTP pocket.

Belongs to the CofE family. As to quaternary structure, homodimer. The cofactor is Mg(2+). Requires Mn(2+) as cofactor. K(+) serves as cofactor.

The enzyme catalyses oxidized coenzyme F420-0 + GTP + L-glutamate = oxidized coenzyme F420-1 + GDP + phosphate + H(+). The catalysed reaction is oxidized coenzyme F420-1 + GTP + L-glutamate = oxidized coenzyme F420-2 + GDP + phosphate + H(+). It functions in the pathway cofactor biosynthesis; coenzyme F420 biosynthesis. Catalyzes the GTP-dependent successive addition of two or more gamma-linked L-glutamates to the L-lactyl phosphodiester of 7,8-didemethyl-8-hydroxy-5-deazariboflavin (F420-0) to form coenzyme F420-0-glutamyl-glutamate (F420-2) or polyglutamated F420 derivatives. The chain is Coenzyme F420:L-glutamate ligase from Natronomonas pharaonis (strain ATCC 35678 / DSM 2160 / CIP 103997 / JCM 8858 / NBRC 14720 / NCIMB 2260 / Gabara) (Halobacterium pharaonis).